The sequence spans 259 residues: DNA utilization protein HofM (259 aa).

Required for the use of extracellular DNA as a nutrient. The sequence is that of DNA utilization protein HofM (hofM) from Escherichia coli (strain K12).